Consider the following 216-residue polypeptide: Phosphoenolpyruvate guanylyltransferase (216 aa).

3 residues coordinate phosphoenolpyruvate: Thr-143, Gly-159, and Ser-162.

The protein belongs to the CofC family.

The enzyme catalyses phosphoenolpyruvate + GTP + H(+) = enolpyruvoyl-2-diphospho-5'-guanosine + diphosphate. The protein operates within cofactor biosynthesis; coenzyme F420 biosynthesis. In terms of biological role, guanylyltransferase that catalyzes the activation of phosphoenolpyruvate (PEP) as enolpyruvoyl-2-diphospho-5'-guanosine, via the condensation of PEP with GTP. It is involved in the biosynthesis of coenzyme F420, a hydride carrier cofactor. The polypeptide is Phosphoenolpyruvate guanylyltransferase (Streptomyces scabiei (strain 87.22)).